The following is a 639-amino-acid chain: MLNSYSPLQSPSSSITLPPLFHINNNNNNNNNNNNNNGHNNDKQNVNKLGLKLNINGYDSGFSPFSPNHSIANNNNNNNNNNNNNNNNNNNNNNNNNNNNNNNNNNNIQSPKNNNSNNNKLNESCGSLNSSNDNNFNSGNDDNSLKRVRVFSNQNQNQNQNQNQNQNQNQNQNQNQNQNQKDSWNIHFGEIVNIVLELESVLSCKNENINQINQIKSSEKSMRSALYKKEIEILELKDKLNNSSATFNSLKVIQPIKLEKSPRTLNNSSDSISENINNNNNNNNNNNNNNNNNINESNINTSPTHELSGSSGTLGGYSKSHILSILDDLDSESSNISSDSEDDEQPRKVPRDLNYKPNNNINYANNNNNNNNNNNNNNHNNNINNNNNNNNNNNNNSNNYHHSIGSITNSVNIKPSKDQTSNDWAAATEALLNLHTNKNNNNNNNNNNNNNNNYHSNNNNYSNSPNTTPPYQNSNQQFNNNQPQSQQQQQSQQQQQQQQQYQNSINKNITTTTNNNNNNLTSSSNNQAVVYGNTSPNQSSANGNNENVIGVPFTGSIVKRKKRGKLPGEATSILKKWLFEHNMHPYPTEEEKVALANSTFLSFNQINNWFTNARRRILPRQLDRKVFGSPLFSHFSITK.

Disordered regions lie at residues Met-1–Asn-45, Ser-66–Ser-144, Asn-157–Asn-179, Pro-262–Thr-313, Ser-331–Asn-422, and Thr-436–Asn-547. A coiled-coil region spans residues Ala-72 to Gln-109. Composition is skewed to low complexity over residues Asn-73–Asn-119 and Gly-126–Asp-142. Coiled coils occupy residues Ser-152–Trp-184 and Glu-230–Glu-296. The segment covering Asn-266–Asn-300 has biased composition (low complexity). Basic and acidic residues predominate over residues Gln-345–Asn-354. The segment covering Asn-358–Asn-399 has biased composition (low complexity). A coiled-coil region spans residues Asn-365–Asn-396. Over residues Gly-405–Asn-422 the composition is skewed to polar residues. A compositionally biased stretch (low complexity) spans Thr-436–Asn-526. Residues Gly-532–Asn-547 are compositionally biased toward polar residues. Residues Lys-559–Gln-621 constitute a DNA-binding region (homeobox).

Its subcellular location is the nucleus. In terms of biological role, putative transcription factor. The sequence is that of Homeobox protein 9 (hbx9) from Dictyostelium discoideum (Social amoeba).